A 256-amino-acid polypeptide reads, in one-letter code: 4-oxalocrotonate decarboxylase (256 aa).

This sequence belongs to the hydratase/decarboxylase family. Forms a complex with AmnF. Mg(2+) serves as cofactor. Requires Mn(2+) as cofactor.

The catalysed reaction is (3E)-2-oxohex-3-enedioate + H(+) = 2-oxopent-4-enoate + CO2. Its activity is regulated as follows. Strongly inhibited by Fe(2+), Fe(3+), K(3)[Fe(CN)(6)], Ag(+) and Cu(2+). Involved in the modified meta-cleavage pathway for the 2-aminophenol catabolism. This is 4-oxalocrotonate decarboxylase (amnE) from Pseudomonas sp.